The primary structure comprises 284 residues: 2-dehydro-3-deoxyphosphooctonate aldolase (284 aa).

Belongs to the KdsA family.

It localises to the cytoplasm. It carries out the reaction D-arabinose 5-phosphate + phosphoenolpyruvate + H2O = 3-deoxy-alpha-D-manno-2-octulosonate-8-phosphate + phosphate. It participates in carbohydrate biosynthesis; 3-deoxy-D-manno-octulosonate biosynthesis; 3-deoxy-D-manno-octulosonate from D-ribulose 5-phosphate: step 2/3. It functions in the pathway bacterial outer membrane biogenesis; lipopolysaccharide biosynthesis. The protein is 2-dehydro-3-deoxyphosphooctonate aldolase of Burkholderia mallei (strain NCTC 10247).